A 214-amino-acid chain; its full sequence is Response regulator GacA (214 aa).

In terms of domain architecture, Response regulatory spans 3-119; the sequence is KVLVVDDHDL…EMVQAIRLVF (117 aa). Aspartate 54 carries the 4-aspartylphosphate modification. In terms of domain architecture, HTH luxR-type spans 143 to 208; the sequence is NNSPFDLLSE…ELALLAVRHG (66 aa). The H-T-H motif DNA-binding region spans 167–186; it reads VQTISDKLCLSPKTVNTYRY.

Phosphorylated by LemA.

Its function is as follows. Forms part of a two-component regulatory system GacA/GacA(LemA). May be involved in lesion formation, swarming and in the production of extracellular protease, syringomycin and N-acyl-L-homoserine lactone (acyl-HSL). In Pseudomonas syringae pv. syringae (strain B728a), this protein is Response regulator GacA (gacA).